The primary structure comprises 213 residues: tRNA (guanine-N(7)-)-methyltransferase (213 aa).

4 residues coordinate S-adenosyl-L-methionine: E44, E69, N96, and D118. The active site involves D118. Substrate is bound at residue K122. Positions 124 to 129 are interaction with RNA; sequence RHEKRR. Substrate contacts are provided by residues D154 and 192 to 195; that span reads TEYE.

It belongs to the class I-like SAM-binding methyltransferase superfamily. TrmB family.

The catalysed reaction is guanosine(46) in tRNA + S-adenosyl-L-methionine = N(7)-methylguanosine(46) in tRNA + S-adenosyl-L-homocysteine. The protein operates within tRNA modification; N(7)-methylguanine-tRNA biosynthesis. Functionally, catalyzes the formation of N(7)-methylguanine at position 46 (m7G46) in tRNA. The chain is tRNA (guanine-N(7)-)-methyltransferase from Latilactobacillus sakei subsp. sakei (strain 23K) (Lactobacillus sakei subsp. sakei).